The primary structure comprises 1165 residues: ATP-dependent helicase/deoxyribonuclease subunit B (1165 aa).

The region spanning 1–298 (MALRFILGRA…AHLEREFFRR (298 aa)) is the UvrD-like helicase ATP-binding domain. ATP is bound at residue 8–15 (GRAGTGKT). Residues 279-584 (PARFRANPAL…QLALIPPALD (306 aa)) enclose the UvrD-like helicase C-terminal domain. Cys800, Cys1119, Cys1122, and Cys1128 together coordinate [4Fe-4S] cluster.

This sequence belongs to the helicase family. AddB/RexB type 1 subfamily. In terms of assembly, heterodimer of AddA and AddB. Requires Mg(2+) as cofactor. It depends on [4Fe-4S] cluster as a cofactor.

The heterodimer acts as both an ATP-dependent DNA helicase and an ATP-dependent, dual-direction single-stranded exonuclease. Recognizes the chi site generating a DNA molecule suitable for the initiation of homologous recombination. The AddB subunit has 5' -&gt; 3' nuclease activity but not helicase activity. The polypeptide is ATP-dependent helicase/deoxyribonuclease subunit B (Desulforudis audaxviator (strain MP104C)).